The chain runs to 411 residues: uncharacterized protein (411 aa).

Belongs to the peptidase M20 family.

This is an uncharacterized protein from Haemophilus influenzae (strain ATCC 51907 / DSM 11121 / KW20 / Rd).